A 389-amino-acid chain; its full sequence is MVSVSEIRKPQRAEGPATILAIGTANPANCVEQSTYPDFYFKITNSEHKTVLKEKFQRMCDKSMIKRRYMYLTEEILKENPSLCEYMAPSLDARQDMVVVEVPRLGKEAAVKAIKEWGQPKSKITHLIFCTTSGVDMPGADYQLTKLLGLRPYVKRYMMYQQGCFAGGTVLRLAKDLAENNKGARVLVVCSEVTAVTFRGPSDTHLDSLVGQALFGDGAAALIVGSDPVPEIEKPIFEMVWTAQTIAPDSEGAIDGHLREQGLTFHLLKDVPGIVSKNIDKALVEAFKPLGISDYNSIFWIAHPGGPAILDQVEQKLGLKPEKMRATREVLSEYGNMSSACVLFILDQMRKKSTQDGLNTTGEGLEWGVLFGFGPGLTIETVVLHSVAI.

Cys-164 is a catalytic residue.

It belongs to the thiolase-like superfamily. Chalcone/stilbene synthases family.

It catalyses the reaction (E)-4-coumaroyl-CoA + 3 malonyl-CoA + 3 H(+) = 2',4,4',6'-tetrahydroxychalcone + 3 CO2 + 4 CoA. Its pathway is secondary metabolite biosynthesis; flavonoid biosynthesis. In terms of biological role, the primary product of this enzyme is 4,2',4',6'-tetrahydroxychalcone (also termed naringenin-chalcone or chalcone) which can under specific conditions spontaneously isomerize into naringenin. In Pisum sativum (Garden pea), this protein is Chalcone synthase 1 (CHS1).